Here is a 479-residue protein sequence, read N- to C-terminus: Sulfate adenylyltransferase subunit 1 (479 aa).

The region spanning 25–239 (KSLLRFLTCG…EVLETVDIQR (215 aa)) is the tr-type G domain. Positions 34–41 (GSVDDGKS) are G1. 34–41 (GSVDDGKS) is a binding site for GTP. Positions 92-96 (GITID) are G2. Positions 113–116 (DTPG) are G3. Residues 113-117 (DTPGH) and 168-171 (NKMD) each bind GTP. The segment at 168–171 (NKMD) is G4. Residues 206–208 (SAL) are G5.

Belongs to the TRAFAC class translation factor GTPase superfamily. Classic translation factor GTPase family. CysN/NodQ subfamily. In terms of assembly, heterodimer composed of CysD, the smaller subunit, and CysN.

The catalysed reaction is sulfate + ATP + H(+) = adenosine 5'-phosphosulfate + diphosphate. Its pathway is sulfur metabolism; hydrogen sulfide biosynthesis; sulfite from sulfate: step 1/3. With CysD forms the ATP sulfurylase (ATPS) that catalyzes the adenylation of sulfate producing adenosine 5'-phosphosulfate (APS) and diphosphate, the first enzymatic step in sulfur assimilation pathway. APS synthesis involves the formation of a high-energy phosphoric-sulfuric acid anhydride bond driven by GTP hydrolysis by CysN coupled to ATP hydrolysis by CysD. The chain is Sulfate adenylyltransferase subunit 1 from Salmonella arizonae (strain ATCC BAA-731 / CDC346-86 / RSK2980).